The sequence spans 318 residues: Pantothenate kinase (318 aa).

Residue 96 to 103 (GSVAVGKS) coordinates ATP.

It belongs to the prokaryotic pantothenate kinase family.

The protein resides in the cytoplasm. It catalyses the reaction (R)-pantothenate + ATP = (R)-4'-phosphopantothenate + ADP + H(+). The protein operates within cofactor biosynthesis; coenzyme A biosynthesis; CoA from (R)-pantothenate: step 1/5. This is Pantothenate kinase from Nitrobacter hamburgensis (strain DSM 10229 / NCIMB 13809 / X14).